A 263-amino-acid polypeptide reads, in one-letter code: Dihydropteroate synthase type-3 (263 aa).

The Pterin-binding domain occupies 2-257; that stretch reads SKIFGIVNIT…DVKSLSDALK (256 aa). N9 contributes to the Mg(2+) binding site. S49 is a binding site for 4-aminobenzoate. Residues D82, N101, and D172 each contribute to the (7,8-dihydropterin-6-yl)methyl diphosphate site. 2 residues coordinate 6-hydroxymethyl-7,8-dihydropterin: N101 and D172. F177 is a 4-aminobenzoate binding site. Position 211 (K211) interacts with (7,8-dihydropterin-6-yl)methyl diphosphate. K211 is a binding site for 6-hydroxymethyl-7,8-dihydropterin. S212 is a 4-aminobenzoate binding site. 245–247 is a binding site for (7,8-dihydropterin-6-yl)methyl diphosphate; it reads RTH.

This sequence belongs to the DHPS family. Mg(2+) serves as cofactor.

It carries out the reaction (7,8-dihydropterin-6-yl)methyl diphosphate + 4-aminobenzoate = 7,8-dihydropteroate + diphosphate. It functions in the pathway cofactor biosynthesis; tetrahydrofolate biosynthesis; 7,8-dihydrofolate from 2-amino-4-hydroxy-6-hydroxymethyl-7,8-dihydropteridine diphosphate and 4-aminobenzoate: step 1/2. Its function is as follows. Catalyzes the condensation of para-aminobenzoate (pABA) with 6-hydroxymethyl-7,8-dihydropterin diphosphate (DHPt-PP) to form 7,8-dihydropteroate (H2Pte), the immediate precursor of folate derivatives. Confers resistance to sulfonamide antibiotics, including sulfamethoxazole (SMX), sulfadiazine and sulfisoxazole. This Escherichia coli protein is Dihydropteroate synthase type-3.